The following is a 2346-amino-acid chain: Acetyl-CoA carboxylase 1 (2346 aa).

Methionine 1 bears the N-acetylmethionine mark. Phosphoserine occurs at positions 5, 23, 25, 29, 34, 48, 50, and 53. Threonine 58 bears the Phosphothreonine mark. Phosphoserine occurs at positions 78 and 80. In terms of domain architecture, Biotin carboxylation spans 117 to 618 (VIEKVLIANN…DTGWLDRLIA (502 aa)). The 192-residue stretch at 275–466 (SKRILNVPQE…LPAAQLQIAM (192 aa)) folds into the ATP-grasp domain. 315–320 (GGGGKG) serves as a coordination point for ATP. Mg(2+)-binding residues include glutamate 424, glutamate 437, and asparagine 439. The Mn(2+) site is built by glutamate 424, glutamate 437, and asparagine 439. The active site involves arginine 441. Phosphoserine is present on serine 488. At threonine 610 the chain carries Phosphothreonine. Positions 745 to 819 (FEKENDPSVM…DPGCVLAKMQ (75 aa)) constitute a Biotinyl-binding domain. Lysine 786 carries the N6-biotinyllysine modification. Phosphoserine is present on residues serine 835, serine 1201, serine 1216, and serine 1218. Threonine 1227 carries the phosphothreonine modification. Phosphoserine occurs at positions 1259, 1263, and 1273. Lysine 1334 bears the N6-acetyllysine mark. The 339-residue stretch at 1576–1914 (PYVTKDLLQS…SVHSSVPLLN (339 aa)) folds into the CoA carboxyltransferase N-terminal domain. Positions 1576-2234 (PYVTKDLLQS…EDLVKKKIHN (659 aa)) are carboxyltransferase. The CoA site is built by arginine 1823, lysine 2127, and arginine 2129. Positions 1918–2234 (PIDRIIEFVP…EDLVKKKIHN (317 aa)) constitute a CoA carboxyltransferase C-terminal domain. The residue at position 2153 (threonine 2153) is a Phosphothreonine.

In terms of assembly, monomer, homodimer, and homotetramer. Can form filamentous polymers. Interacts in its inactive phosphorylated form with the BRCT domains of BRCA1 which prevents ACACA dephosphorylation and inhibits lipid synthesis. Interacts with MID1IP1; interaction with MID1IP1 promotes oligomerization and increases its activity. Requires Mg(2+) as cofactor. The cofactor is Mn(2+). Biotin is required as a cofactor. Phosphorylation on Ser-1263 is required for interaction with BRCA1. Post-translationally, phosphorylation at Ser-80 by AMPK inactivates enzyme activity. In terms of processing, the biotin cofactor is covalently attached to the central biotinyl-binding domain and is required for the catalytic activity. In terms of tissue distribution, expressed in brain, placenta, skeletal muscle, renal, pancreatic and adipose tissues; expressed at low level in pulmonary tissue; not detected in the liver.

It localises to the cytoplasm. The protein resides in the cytosol. It catalyses the reaction hydrogencarbonate + acetyl-CoA + ATP = malonyl-CoA + ADP + phosphate + H(+). Its pathway is lipid metabolism; malonyl-CoA biosynthesis; malonyl-CoA from acetyl-CoA: step 1/1. Its activity is regulated as follows. Inhibited by phosphorylation. Citrate promotes oligomerization of the protein into filaments that correspond to the most active form of the carboxylase. Inhibited by palmitoyl-CoA. Its function is as follows. Cytosolic enzyme that catalyzes the carboxylation of acetyl-CoA to malonyl-CoA, the first and rate-limiting step of de novo fatty acid biosynthesis. This is a 2 steps reaction starting with the ATP-dependent carboxylation of the biotin carried by the biotin carboxyl carrier (BCC) domain followed by the transfer of the carboxyl group from carboxylated biotin to acetyl-CoA. The protein is Acetyl-CoA carboxylase 1 of Homo sapiens (Human).